The sequence spans 293 residues: 33 kDa chaperonin (293 aa).

Disulfide bonds link Cys238–Cys240 and Cys271–Cys274.

The protein belongs to the HSP33 family. Post-translationally, under oxidizing conditions two disulfide bonds are formed involving the reactive cysteines. Under reducing conditions zinc is bound to the reactive cysteines and the protein is inactive.

It localises to the cytoplasm. In terms of biological role, redox regulated molecular chaperone. Protects both thermally unfolding and oxidatively damaged proteins from irreversible aggregation. Plays an important role in the bacterial defense system toward oxidative stress. The protein is 33 kDa chaperonin of Clostridium beijerinckii (strain ATCC 51743 / NCIMB 8052) (Clostridium acetobutylicum).